The primary structure comprises 361 residues: Ferredoxin--NADP reductase 1 (361 aa).

Aspartate 44, glutamine 52, tyrosine 57, alanine 97, phenylalanine 142, aspartate 308, and serine 349 together coordinate FAD.

The protein belongs to the ferredoxin--NADP reductase type 2 family. In terms of assembly, homodimer. Requires FAD as cofactor.

The catalysed reaction is 2 reduced [2Fe-2S]-[ferredoxin] + NADP(+) + H(+) = 2 oxidized [2Fe-2S]-[ferredoxin] + NADPH. This is Ferredoxin--NADP reductase 1 from Cupriavidus necator (strain ATCC 17699 / DSM 428 / KCTC 22496 / NCIMB 10442 / H16 / Stanier 337) (Ralstonia eutropha).